A 105-amino-acid polypeptide reads, in one-letter code: MSPISQKGEAVCLSVRVQPRSSKSGVAGMYGEQLKICLKSAPVDNAANKECCELLAKALGVPRSSVSVMKGASSRSKVLKVEGVTPAAVREALVGMLGDEAEAGA.

It belongs to the UPF0235 family.

The polypeptide is UPF0235 protein CT1832 (Chlorobaculum tepidum (strain ATCC 49652 / DSM 12025 / NBRC 103806 / TLS) (Chlorobium tepidum)).